The chain runs to 224 residues: uncharacterized protein (224 aa).

A signal peptide spans 1–17 (MFTILLYFLVLFWVTNA).

This is an uncharacterized protein from Caenorhabditis elegans.